A 217-amino-acid polypeptide reads, in one-letter code: ATP phosphoribosyltransferase (217 aa).

Belongs to the ATP phosphoribosyltransferase family. Short subfamily. In terms of assembly, heteromultimer composed of HisG and HisZ subunits.

It is found in the cytoplasm. The enzyme catalyses 1-(5-phospho-beta-D-ribosyl)-ATP + diphosphate = 5-phospho-alpha-D-ribose 1-diphosphate + ATP. It functions in the pathway amino-acid biosynthesis; L-histidine biosynthesis; L-histidine from 5-phospho-alpha-D-ribose 1-diphosphate: step 1/9. Functionally, catalyzes the condensation of ATP and 5-phosphoribose 1-diphosphate to form N'-(5'-phosphoribosyl)-ATP (PR-ATP). Has a crucial role in the pathway because the rate of histidine biosynthesis seems to be controlled primarily by regulation of HisG enzymatic activity. The polypeptide is ATP phosphoribosyltransferase (Synechococcus sp. (strain WH7803)).